We begin with the raw amino-acid sequence, 116 residues long: Methionine-R-sulfoxide reductase B1 (116 aa).

The region spanning 1 to 106 is the MsrB domain; sequence MSFCSFFGGE…FSSSLKFVPK (106 aa). Zn(2+)-binding residues include Cys23, Cys26, Cys71, and Cys74. The active-site Nucleophile is the Sec95. Residue Sec95 is a non-standard amino acid, selenocysteine.

Belongs to the MsrB Met sulfoxide reductase family. Zn(2+) serves as cofactor. Truncated MSRB1/SEPX1 proteins produced by failed UGA/Sec decoding are ubiquitinated by some Cul2-RING E3 ubiquitin-protein ligase complexes (containing either PRAME, PRAMF6, PRAMF9 or FEM1C as substrate-recognition component).

Its subcellular location is the cytoplasm. The protein resides in the nucleus. It localises to the cytoskeleton. The enzyme catalyses L-methionyl-[protein] + [thioredoxin]-disulfide + H2O = L-methionyl-(R)-S-oxide-[protein] + [thioredoxin]-dithiol. It carries out the reaction [thioredoxin]-disulfide + L-methionine + H2O = L-methionine (R)-S-oxide + [thioredoxin]-dithiol. In terms of biological role, methionine-sulfoxide reductase that specifically reduces methionine (R)-sulfoxide back to methionine. While in many cases, methionine oxidation is the result of random oxidation following oxidative stress, methionine oxidation is also a post-translational modification that takes place on specific residue. Acts as a regulator of actin assembly by reducing methionine (R)-sulfoxide mediated by MICALs (MICAL1, MICAL2 or MICAL3) on actin, thereby promoting filament repolymerization. Plays a role in innate immunity by reducing oxidized actin, leading to actin repolymerization in macrophages. The sequence is that of Methionine-R-sulfoxide reductase B1 (MSRB1) from Homo sapiens (Human).